The primary structure comprises 227 residues: Cytochrome c oxidase subunit 2 (227 aa).

The Mitochondrial intermembrane segment spans residues 1 to 14 (MAYPFQLGLQDATS). The helical transmembrane segment at 15–45 (PIMEELTNFHDHTLMIVFLISSLVLYIISLM) threads the bilayer. At 46-59 (LTTKLTHTSTMDAQ) the chain is on the mitochondrial matrix side. A helical membrane pass occupies residues 60–87 (EVETIWTILPAAILVLIALPSLRILYMM). Topologically, residues 88–227 (DEINNPVLTV…YFESWSASMI (140 aa)) are mitochondrial intermembrane. Cu cation is bound by residues histidine 161, cysteine 196, glutamate 198, cysteine 200, histidine 204, and methionine 207. Residue glutamate 198 participates in Mg(2+) binding. Tyrosine 218 carries the phosphotyrosine modification.

This sequence belongs to the cytochrome c oxidase subunit 2 family. Component of the cytochrome c oxidase (complex IV, CIV), a multisubunit enzyme composed of 14 subunits. The complex is composed of a catalytic core of 3 subunits MT-CO1, MT-CO2 and MT-CO3, encoded in the mitochondrial DNA, and 11 supernumerary subunits COX4I, COX5A, COX5B, COX6A, COX6B, COX6C, COX7A, COX7B, COX7C, COX8 and NDUFA4, which are encoded in the nuclear genome. The complex exists as a monomer or a dimer and forms supercomplexes (SCs) in the inner mitochondrial membrane with NADH-ubiquinone oxidoreductase (complex I, CI) and ubiquinol-cytochrome c oxidoreductase (cytochrome b-c1 complex, complex III, CIII), resulting in different assemblies (supercomplex SCI(1)III(2)IV(1) and megacomplex MCI(2)III(2)IV(2)). Found in a complex with TMEM177, COA6, COX18, COX20, SCO1 and SCO2. Interacts with TMEM177 in a COX20-dependent manner. Interacts with COX20. Interacts with COX16. The cofactor is Cu cation.

It is found in the mitochondrion inner membrane. It catalyses the reaction 4 Fe(II)-[cytochrome c] + O2 + 8 H(+)(in) = 4 Fe(III)-[cytochrome c] + 2 H2O + 4 H(+)(out). In terms of biological role, component of the cytochrome c oxidase, the last enzyme in the mitochondrial electron transport chain which drives oxidative phosphorylation. The respiratory chain contains 3 multisubunit complexes succinate dehydrogenase (complex II, CII), ubiquinol-cytochrome c oxidoreductase (cytochrome b-c1 complex, complex III, CIII) and cytochrome c oxidase (complex IV, CIV), that cooperate to transfer electrons derived from NADH and succinate to molecular oxygen, creating an electrochemical gradient over the inner membrane that drives transmembrane transport and the ATP synthase. Cytochrome c oxidase is the component of the respiratory chain that catalyzes the reduction of oxygen to water. Electrons originating from reduced cytochrome c in the intermembrane space (IMS) are transferred via the dinuclear copper A center (CU(A)) of subunit 2 and heme A of subunit 1 to the active site in subunit 1, a binuclear center (BNC) formed by heme A3 and copper B (CU(B)). The BNC reduces molecular oxygen to 2 water molecules using 4 electrons from cytochrome c in the IMS and 4 protons from the mitochondrial matrix. In Conilurus penicillatus (Brush-tailed rabbit-rat), this protein is Cytochrome c oxidase subunit 2 (MT-CO2).